Reading from the N-terminus, the 560-residue chain is Membrane protein insertase YidC (560 aa).

6 helical membrane passes run 5 to 25 (IINLVAAIILSLSIIFGWQYF), 334 to 354 (AIDFGWFYIITKPVFYAMNFF), 357 to 377 (YVGNFGVSILIVTVIIKLLMF), 431 to 451 (LPILVQIPVFFSIYKVLYVTI), 476 to 496 (LFGLLPFSPPSFLMIGAWPIL), and 522 to 542 (FMPLIFLFMFSSFPVGLLIYW).

Belongs to the OXA1/ALB3/YidC family. Type 1 subfamily. As to quaternary structure, interacts with the Sec translocase complex via SecD. Specifically interacts with transmembrane segments of nascent integral membrane proteins during membrane integration.

The protein localises to the cell inner membrane. Its function is as follows. Required for the insertion and/or proper folding and/or complex formation of integral membrane proteins into the membrane. Involved in integration of membrane proteins that insert both dependently and independently of the Sec translocase complex, as well as at least some lipoproteins. Aids folding of multispanning membrane proteins. This Rickettsia massiliae (strain Mtu5) protein is Membrane protein insertase YidC.